The chain runs to 396 residues: S-adenosylmethionine synthase (396 aa).

ATP is bound at residue His16. Asp18 contributes to the Mg(2+) binding site. Residue Glu44 participates in K(+) binding. L-methionine is bound by residues Glu57 and Gln100. The interval 100–110 (QSPDIAQGVNE) is flexible loop. Residues 175–177 (DAK), 242–243 (RF), Asp251, 257–258 (RK), Ala274, and Lys278 each bind ATP. Asp251 is an L-methionine binding site. Lys282 contacts L-methionine.

The protein belongs to the AdoMet synthase family. As to quaternary structure, homotetramer; dimer of dimers. Requires Mg(2+) as cofactor. It depends on K(+) as a cofactor.

The protein resides in the cytoplasm. It carries out the reaction L-methionine + ATP + H2O = S-adenosyl-L-methionine + phosphate + diphosphate. It participates in amino-acid biosynthesis; S-adenosyl-L-methionine biosynthesis; S-adenosyl-L-methionine from L-methionine: step 1/1. Its function is as follows. Catalyzes the formation of S-adenosylmethionine (AdoMet) from methionine and ATP. The overall synthetic reaction is composed of two sequential steps, AdoMet formation and the subsequent tripolyphosphate hydrolysis which occurs prior to release of AdoMet from the enzyme. In Streptococcus suis (strain 05ZYH33), this protein is S-adenosylmethionine synthase.